Consider the following 633-residue polypeptide: Polypeptide N-acetylgalactosaminyltransferase 3 (633 aa).

Topologically, residues 1-19 are cytoplasmic; it reads MAHLKRLVKLHIKRHYHRK. The helical; Signal-anchor for type II membrane protein transmembrane segment at 20–37 threads the bilayer; sequence FWKLGAVIFFFLVVLILM. Residues 38 to 633 lie on the Lumenal side of the membrane; sequence QREVSVQYSK…LQKWIFSQND (596 aa). The tract at residues 112-145 is disordered; it reads DRPPQDSNAPGASGKPFKITHLSPEEQKEKERGE. Residues 134 to 145 are compositionally biased toward basic and acidic residues; it reads SPEEQKEKERGE. The segment at 184 to 293 is catalytic subdomain A; it reads LPTTSVIIVF…YGWLEPLLAR (110 aa). Aspartate 277 and histidine 279 together coordinate Mn(2+). A glycan (N-linked (GlcNAc...) asparagine) is linked at asparagine 297. The interval 356–418 is catalytic subdomain B; it reads PIKTPTFAGG…PCSVVGHVFR (63 aa). Histidine 415 contacts Mn(2+). Asparagine 484 carries an N-linked (GlcNAc...) asparagine glycan. One can recognise a Ricin B-type lectin domain in the interval 504 to 630; that stretch reads VISGYIKSVG…TDLLQKWIFS (127 aa). Cysteine 517 and cysteine 535 are joined by a disulfide. Positions 519, 522, 536, and 541 each coordinate UDP-N-acetyl-alpha-D-galactosamine. 2 disulfide bridges follow: cysteine 561–cysteine 574 and cysteine 605–cysteine 618.

This sequence belongs to the glycosyltransferase 2 family. GalNAc-T subfamily. It depends on Mn(2+) as a cofactor. Highly expressed in the reproductive tract, principally in the testis and uterus, and to a lesser degree in the cervix with only trace levels in the ovary. Also expressed at high level in sublingual gland, stomach and colon, with more moderate amounts present in the submandibular and parotid gland as well as the kidney.

It localises to the golgi apparatus. Its subcellular location is the golgi stack membrane. The catalysed reaction is L-seryl-[protein] + UDP-N-acetyl-alpha-D-galactosamine = a 3-O-[N-acetyl-alpha-D-galactosaminyl]-L-seryl-[protein] + UDP + H(+). It catalyses the reaction L-threonyl-[protein] + UDP-N-acetyl-alpha-D-galactosamine = a 3-O-[N-acetyl-alpha-D-galactosaminyl]-L-threonyl-[protein] + UDP + H(+). Its pathway is protein modification; protein glycosylation. Its function is as follows. Catalyzes the initial reaction in O-linked oligosaccharide biosynthesis, the transfer of an N-acetyl-D-galactosamine residue to a serine or threonine residue on the protein receptor. Has activity toward HIV envelope glycoprotein gp120. Has activity towards EA2, MUC2 and MUC5. Probably glycosylates fibronectin in vivo. Glycosylates FGF23. In Mus musculus (Mouse), this protein is Polypeptide N-acetylgalactosaminyltransferase 3 (Galnt3).